Here is a 249-residue protein sequence, read N- to C-terminus: Basigin (249 aa).

The region spanning Ala1–Gly82 is the Ig-like C2-type domain. Residues Ala1 to Ala187 are Extracellular-facing. 2 disulfides stabilise this stretch: Cys20–Cys66 and Cys105–Cys165. Residues Asn23, Asn132, and Asn166 are each glycosylated (N-linked (GlcNAc...) asparagine). The 96-residue stretch at Pro84–Thr179 folds into the Ig-like V-type domain. The helical transmembrane segment at Ala188 to Ile208 threads the bilayer. Residues Tyr209–Thr249 are Cytoplasmic-facing. Residues Asp216–Thr249 are disordered. Thr218 carries the phosphothreonine modification. Ser232 bears the Phosphoserine mark.

In terms of assembly, homooligomer. Interacts with VEGFA, KDR/VEGFR2, PPIA/CYPA, SLC16A12, SLC16A11, ATP1B2, MAG, L1CAM and AJAP1. Interacts with SLC16A3; interaction mediates SLC16A3 targeting to the plasma membrane. Interacts with SLC16A1; interaction mediates SLC16A1 targeting to the plasma membrane. Interacts with PPIL2; regulates BSG transport to the cell membrane. Interacts with XKR8; promoting its localization at the cell membrane. Interacts with SLC16A6; this interaction mediates targeting to the plasma membrane.

It localises to the cell membrane. The protein resides in the endoplasmic reticulum membrane. The protein localises to the basolateral cell membrane. Signaling receptor for cyclophilins, essential for PPIA/CYPA and PPIB/CYPB-dependent signaling related to chemotaxis and adhesion of immune cells. Plays an important role in targeting the monocarboxylate transporters SLC16A1/GLUT1, SLC16A3, SLC16A8, SLC16A11 and SLC16A12 to the plasma membrane. Acts as a coreceptor for vascular endothelial growth factor receptor 2 (KDR/VEGFR2) in endothelial cells enhancing its VEGFA-mediated activation and downstream signaling. Promotes angiogenesis through EPAS1/HIF2A-mediated up-regulation of VEGFA and KDR/VEGFR2 in endothelial cells. The polypeptide is Basigin (BSG) (Cricetulus griseus (Chinese hamster)).